Reading from the N-terminus, the 131-residue chain is Profilin-3 (131 aa).

Belongs to the profilin family. As to quaternary structure, occurs in many kinds of cells as a complex with monomeric actin in a 1:1 ratio.

It is found in the cytoplasm. The protein resides in the cytoskeleton. In terms of biological role, binds to actin and affects the structure of the cytoskeleton. At high concentrations, profilin prevents the polymerization of actin, whereas it enhances it at low concentrations. By binding to PIP2, it inhibits the formation of IP3 and DG. In Hevea brasiliensis (Para rubber tree), this protein is Profilin-3.